A 44-amino-acid polypeptide reads, in one-letter code: Diuretic hormone (44 aa).

The residue at position 44 (valine 44) is a Valine amide.

It is found in the secreted. In terms of biological role, regulation of fluid secretion. Stimulates primary urine secretion by Malpighian tubules and causes a dose-dependent stimulation of cAMP levels in the tubules. May act as clearance peptide in that it may remove metabolic waste from the hemolymph. The sequence is that of Diuretic hormone from Stomoxys calcitrans (Stable fly).